The sequence spans 94 residues: Large ribosomal subunit protein bL25 (94 aa).

This sequence belongs to the bacterial ribosomal protein bL25 family. In terms of assembly, part of the 50S ribosomal subunit; part of the 5S rRNA/L5/L18/L25 subcomplex. Contacts the 5S rRNA. Binds to the 5S rRNA independently of L5 and L18.

Functionally, this is one of the proteins that binds to the 5S RNA in the ribosome where it forms part of the central protuberance. This is Large ribosomal subunit protein bL25 from Enterobacter sp. (strain 638).